The sequence spans 298 residues: S-adenosyl-L-methionine-dependent methyltransferase dpfgK (298 aa).

The protein belongs to the methyltransferase superfamily.

Its pathway is secondary metabolite biosynthesis; terpenoid biosynthesis. Functionally, S-adenosyl-L-methionine-dependent methyltransferase; part of the gene cluster that mediates the biosynthesis of diterpenoid pyrones. The first step of the pathway is the synthesis of the alpha-pyrone moiety by the polyketide synthase dpfgA via condensation of one acetyl-CoA starter unit with 3 malonyl-CoA units and 2 methylations. The alpha-pyrone is then combined with geranylgeranyl pyrophosphate (GGPP) formed by the GGPP synthase dpfgD through the action of the prenyltransferase dpfgC to yield a linear alpha-pyrone diterpenoid. Subsequent steps in the diterpenoid pyrone biosynthetic pathway involve the decalin core formation, which is initiated by the epoxidation of the C10-C11 olefin by the FAD-dependent oxidoreductase dpfgE, and is followed by a cyclization cascade catalyzed by the terpene cyclase dpfgB. The short chain dehydrogenase/reductase dpfgG then oxidizes the 8S hydroxy group to a ketone and the short chain dehydrogenase/reductase dpfgH reduces the ketone to the 8R hydroxy group to yield higginsianin B. Higginsianin B is further methylated by the methyltransferase dpfgI to produce the intermediate named FDDP B. The cytochrome P450 monooxygenase dfgpJ then catalyzes a three-step oxidation at C-27 to generate a carboxylic acid as well as C-26 hydroxylation. Finally, methyltransferase dpfgK methylates the carboxylic acid generated by dpfgJ, yielding the final diterpenoid pyrones from the pathway which were named FDDP D and FDDP E. In Gibberella zeae (strain ATCC MYA-4620 / CBS 123657 / FGSC 9075 / NRRL 31084 / PH-1) (Wheat head blight fungus), this protein is S-adenosyl-L-methionine-dependent methyltransferase dpfgK.